The primary structure comprises 482 residues: Protein trichome birefringence-like 15 (482 aa).

A helical; Signal-anchor for type II membrane protein membrane pass occupies residues 109–129 (GSVSLSLIILILLVTTLLVSA). A GDS motif motif is present at residues 217–219 (GDS). The short motif at 461–475 (DCLHWCLPGIPDTWN) is the DCXHWCLPGXXDXWN motif element.

Belongs to the PC-esterase family. TBL subfamily.

It is found in the membrane. May act as a bridging protein that binds pectin and other cell wall polysaccharides. Probably involved in maintaining esterification of pectins. May be involved in the specific O-acetylation of cell wall polymers. The polypeptide is Protein trichome birefringence-like 15 (TBL15) (Arabidopsis thaliana (Mouse-ear cress)).